A 943-amino-acid polypeptide reads, in one-letter code: Isoleucine--tRNA ligase (943 aa).

Positions proline 59 to histidine 69 match the 'HIGH' region motif. L-isoleucyl-5'-AMP is bound at residue glutamate 577. Residues lysine 618–serine 622 carry the 'KMSKS' region motif. ATP is bound at residue lysine 621. Cysteine 906, cysteine 909, cysteine 926, and cysteine 929 together coordinate Zn(2+).

Belongs to the class-I aminoacyl-tRNA synthetase family. IleS type 1 subfamily. As to quaternary structure, monomer. Zn(2+) serves as cofactor.

It localises to the cytoplasm. It catalyses the reaction tRNA(Ile) + L-isoleucine + ATP = L-isoleucyl-tRNA(Ile) + AMP + diphosphate. Catalyzes the attachment of isoleucine to tRNA(Ile). As IleRS can inadvertently accommodate and process structurally similar amino acids such as valine, to avoid such errors it has two additional distinct tRNA(Ile)-dependent editing activities. One activity is designated as 'pretransfer' editing and involves the hydrolysis of activated Val-AMP. The other activity is designated 'posttransfer' editing and involves deacylation of mischarged Val-tRNA(Ile). This chain is Isoleucine--tRNA ligase, found in Xanthomonas axonopodis pv. citri (strain 306).